The chain runs to 283 residues: Bifunctional protein FolD (283 aa).

Residues 159 to 161 (GRS), serine 184, and isoleucine 225 contribute to the NADP(+) site.

The protein belongs to the tetrahydrofolate dehydrogenase/cyclohydrolase family. In terms of assembly, homodimer.

It carries out the reaction (6R)-5,10-methylene-5,6,7,8-tetrahydrofolate + NADP(+) = (6R)-5,10-methenyltetrahydrofolate + NADPH. The catalysed reaction is (6R)-5,10-methenyltetrahydrofolate + H2O = (6R)-10-formyltetrahydrofolate + H(+). It participates in one-carbon metabolism; tetrahydrofolate interconversion. Functionally, catalyzes the oxidation of 5,10-methylenetetrahydrofolate to 5,10-methenyltetrahydrofolate and then the hydrolysis of 5,10-methenyltetrahydrofolate to 10-formyltetrahydrofolate. This chain is Bifunctional protein FolD, found in Methanoculleus marisnigri (strain ATCC 35101 / DSM 1498 / JR1).